A 322-amino-acid polypeptide reads, in one-letter code: Retinal homeobox protein Rx-A (322 aa).

Positions 32 to 39 (HSIEAILG) match the Octapeptide motif motif. Residues 75–87 (TEEIHPQQEHLED) show a composition bias toward basic and acidic residues. Residues 75–136 (TEEIHPQQEH…KKKHRRNRTT (62 aa)) are disordered. The span at 100 to 117 (KTSSECLSPGLSTSNSDN) shows a compositional bias: polar residues. Positions 130–189 (HRRNRTTFTTYQLHELERAFEKSHYPDVYSREELAMKVNLPEVRVQVWFQNRRAKWRRQE) form a DNA-binding region, homeobox. The OAR motif lies at 302 to 315 (NSIASLRMKAKEHI). Residues 308 to 312 (RMKAK) carry the Nuclear localization signal motif.

Belongs to the paired homeobox family. Bicoid subfamily. As to expression, highly expressed in anterior neural plate followed by neural retina, pigmented epithelium, in pineal gland, diencephalon floor and epiphysis. At later stages, the neuroretina remains the primary site of expression. No expression in the developing lens and cornea.

The protein localises to the nucleus. In terms of biological role, plays a critical role in eye formation by regulating the initial specification of retinal cells and/or their subsequent proliferation. This is Retinal homeobox protein Rx-A (rax-a) from Xenopus laevis (African clawed frog).